We begin with the raw amino-acid sequence, 304 residues long: UDP-3-O-acyl-N-acetylglucosamine deacetylase (304 aa).

The Zn(2+) site is built by His-77, His-233, and Asp-237. His-260 functions as the Proton donor in the catalytic mechanism.

The protein belongs to the LpxC family. The cofactor is Zn(2+).

The catalysed reaction is a UDP-3-O-[(3R)-3-hydroxyacyl]-N-acetyl-alpha-D-glucosamine + H2O = a UDP-3-O-[(3R)-3-hydroxyacyl]-alpha-D-glucosamine + acetate. It participates in glycolipid biosynthesis; lipid IV(A) biosynthesis; lipid IV(A) from (3R)-3-hydroxytetradecanoyl-[acyl-carrier-protein] and UDP-N-acetyl-alpha-D-glucosamine: step 2/6. Catalyzes the hydrolysis of UDP-3-O-myristoyl-N-acetylglucosamine to form UDP-3-O-myristoylglucosamine and acetate, the committed step in lipid A biosynthesis. This is UDP-3-O-acyl-N-acetylglucosamine deacetylase from Lawsonia intracellularis (strain PHE/MN1-00).